A 34-amino-acid polypeptide reads, in one-letter code: Toxin GTx1-15 (34 aa).

3 cysteine pairs are disulfide-bonded: Cys-2–Cys-17, Cys-9–Cys-23, and Cys-16–Cys-30. Phe-34 carries the post-translational modification Phenylalanine amide.

Belongs to the neurotoxin 10 (Hwtx-1) family. 08 (Gtx1-15) subfamily. In terms of tissue distribution, expressed by the venom gland.

It is found in the secreted. Functionally, potent voltage-gated sodium channel blocker. Potently inhibits the voltage-gated sodium channels Nav1.7/SCN9A (IC(50)=0.58-10 nM). Also shows a moderate activity on Nav1.1/SCN1A (IC(50)=6 nM), Nav1.2/SCN2A (IC(50)=5-128 nM), Nav1.3/SCN3A (IC(50)=20.3-170 nM), and Nav1.6/SCN8A (IC(50)=17-20.1 nM). Shows an unclear inhibition of Nav1.4/SCN4A (IC(50)=200 nM to &gt;10 uM), Nav1.5/SCN5A (IC(50)=140 nM to &gt;10 uM) and Nav1.8/SCN10A (IC(50)=68-12200 nM). Weakly blocks the low voltage-gated calcium channels Cav3.1/CACNA1G (30% inhibition of the peak current at 9.8 nM). shows moderate affinity for lipid bilayers. In vivo, when tested on the OD1-induced mouse model of Nav1.7/SCN9A-mediated pain, the toxin is effective when co-administered with OD1, but lacks efficacy when delivered systemically. The chain is Toxin GTx1-15 from Grammostola porteri (Tarantula spider).